The sequence spans 395 residues: Elongation factor Tu (395 aa).

One can recognise a tr-type G domain in the interval 10–204 (KPHVNIGTIG…AVDSYIPTPE (195 aa)). The tract at residues 19–26 (GHVDHGKT) is G1. 19–26 (GHVDHGKT) lines the GTP pocket. Thr-26 provides a ligand contact to Mg(2+). Residues 60-64 (GITIS) form a G2 region. Residues 81-84 (DCPG) are G3. Residues 81 to 85 (DCPGH) and 136 to 139 (NKCD) contribute to the GTP site. The tract at residues 136 to 139 (NKCD) is G4. The interval 174–176 (SAL) is G5.

It belongs to the TRAFAC class translation factor GTPase superfamily. Classic translation factor GTPase family. EF-Tu/EF-1A subfamily. As to quaternary structure, monomer. In terms of processing, phosphorylated on serine and/or threonine residue(s). Dephosphorylated by stp.

Its subcellular location is the cytoplasm. The enzyme catalyses GTP + H2O = GDP + phosphate + H(+). Functionally, GTP hydrolase that promotes the GTP-dependent binding of aminoacyl-tRNA to the A-site of ribosomes during protein biosynthesis. This chain is Elongation factor Tu, found in Listeria innocua serovar 6a (strain ATCC BAA-680 / CLIP 11262).